The chain runs to 747 residues: Endoglucanase D (747 aa).

Positions 1 to 39 (MHSASRTRARTRVRTAVSGLLAATVLAAPLTLVAAPAQA) are cleaved as a signal peptide. Glu208 acts as the Proton donor in catalysis. The Nucleophile role is filled by Glu349. A disordered region spans residues 456–475 (APTGLRAGTPTASTVPLTWS). Fibronectin type-III domains lie at 456–543 (APTG…TAAG) and 552–639 (VPTG…TAPD). Positions 465-475 (PTASTVPLTWS) are enriched in polar residues. The CBM2 domain maps to 638 to 747 (PDPTTGSCAV…TVGGATCTTR (110 aa)).

It belongs to the glycosyl hydrolase 5 (cellulase A) family.

It carries out the reaction Endohydrolysis of (1-&gt;4)-beta-D-glucosidic linkages in cellulose, lichenin and cereal beta-D-glucans.. The protein operates within glycan metabolism; cellulose degradation. This chain is Endoglucanase D (cenD), found in Cellulomonas fimi.